We begin with the raw amino-acid sequence, 221 residues long: ATP-dependent dethiobiotin synthetase BioD (221 aa).

Position 12-17 (12-17 (EVGKTV)) interacts with ATP. Thr16 serves as a coordination point for Mg(2+). Residue Lys39 is part of the active site. Residue Thr43 coordinates substrate. ATP is bound by residues Asp47, 105–108 (EGLG), and 165–166 (SC). Asp47 and Glu105 together coordinate Mg(2+).

Belongs to the dethiobiotin synthetase family. In terms of assembly, homodimer. It depends on Mg(2+) as a cofactor.

The protein resides in the cytoplasm. It carries out the reaction (7R,8S)-7,8-diammoniononanoate + CO2 + ATP = (4R,5S)-dethiobiotin + ADP + phosphate + 3 H(+). It catalyses the reaction (7R,8S)-8-amino-7-(carboxyamino)nonanoate + ATP = (4R,5S)-dethiobiotin + ADP + phosphate + H(+). The protein operates within cofactor biosynthesis; biotin biosynthesis; biotin from 7,8-diaminononanoate: step 1/2. Functionally, catalyzes a mechanistically unusual reaction, the ATP-dependent insertion of CO2 between the N7 and N8 nitrogen atoms of 7,8-diaminopelargonic acid (DAPA, also called 7,8-diammoniononanoate) to form a ureido ring. This cyanobacterium does not encode bioA (which catalyzes the formation of the precursor for this reaction in the cannonical pathway), instead it encodes bioU, which replaces bioA and also performs the first half of the cannonical BioD reaction. Thus in this organism BioD has a different substrate. The protein is ATP-dependent dethiobiotin synthetase BioD of Crocosphaera subtropica (strain ATCC 51142 / BH68) (Cyanothece sp. (strain ATCC 51142)).